Consider the following 270-residue polypeptide: MPSSFDLLGEMIGLLQTEQLTSSWACPLPNALTKRQDLWRALINQRPALPLSKDYLNLEDAYLDDWRASFVPVSVKDCQKTNYTSLFLYHGDIRYLAVDAIVNAANSELLGCFSPNHGCIDNAIHTFAGSRLRLACQAIMTEQGRKEAIGQAKLTSAYHLPASYIIHTVGPRITKGHHVSPIRADLLARCYRSSLDLAVKAGLTSLAFCSISTGEFGFPKKEAAQIAIKTVLKWQAEHPESKTLTTIFNTFTSEDKALYDTYLQKENNCE.

The Macro domain occupies V73–N267. ADP-D-ribose contacts are provided by D92, I93, and N106. 3 residues coordinate Zn(2+): C112, H117, and C119. Residues C119, I120, D121, S212, T213, G214, E215, and F216 each contribute to the ADP-D-ribose site.

The protein belongs to the MacroD-type family. Zn-Macro subfamily. Zn(2+) is required as a cofactor.

It catalyses the reaction 4-O-(ADP-D-ribosyl)-L-aspartyl-[protein] + H2O = L-aspartyl-[protein] + ADP-D-ribose + H(+). Functionally, ADP-ribosylhydrolase that specifically reverses the SirTM-mediated mono-ADP-ribosylation at an asparatate residue of GcvH-L, by releasing ADP-ribose from the target protein. May play a role in the regulation of the response to host-induced oxidative stress. In Streptococcus pyogenes serotype M1, this protein is Protein-ADP-ribose hydrolase.